The primary structure comprises 282 residues: uncharacterized protein (282 aa).

This is an uncharacterized protein from Mycoplasma pneumoniae (strain ATCC 29342 / M129 / Subtype 1) (Mycoplasmoides pneumoniae).